A 304-amino-acid chain; its full sequence is UDP-N-acetylenolpyruvoylglucosamine reductase (304 aa).

Residues 32 to 198 form the FAD-binding PCMH-type domain; that stretch reads RVGGPADILV…LSAELELQEG (167 aa). R177 is an active-site residue. The active-site Proton donor is S227. E297 is an active-site residue.

Belongs to the MurB family. FAD serves as cofactor.

It is found in the cytoplasm. The catalysed reaction is UDP-N-acetyl-alpha-D-muramate + NADP(+) = UDP-N-acetyl-3-O-(1-carboxyvinyl)-alpha-D-glucosamine + NADPH + H(+). It functions in the pathway cell wall biogenesis; peptidoglycan biosynthesis. Functionally, cell wall formation. This is UDP-N-acetylenolpyruvoylglucosamine reductase from Clostridioides difficile (strain 630) (Peptoclostridium difficile).